A 129-amino-acid chain; its full sequence is Glycine cleavage system H protein (129 aa).

A Lipoyl-binding domain is found at 24–106 (LLKIGVSEFA…IGDGWLVILK (83 aa)). K65 is subject to N6-lipoyllysine.

Belongs to the GcvH family. In terms of assembly, the glycine cleavage system is composed of four proteins: P, T, L and H. Requires (R)-lipoate as cofactor.

Its function is as follows. The glycine cleavage system catalyzes the degradation of glycine. The H protein shuttles the methylamine group of glycine from the P protein to the T protein. This is Glycine cleavage system H protein from Prochlorococcus marinus (strain MIT 9301).